A 426-amino-acid polypeptide reads, in one-letter code: Glutamate-1-semialdehyde 2,1-aminomutase (426 aa).

Lys265 carries the N6-(pyridoxal phosphate)lysine modification.

This sequence belongs to the class-III pyridoxal-phosphate-dependent aminotransferase family. HemL subfamily. Homodimer. Pyridoxal 5'-phosphate serves as cofactor.

The protein localises to the cytoplasm. The enzyme catalyses (S)-4-amino-5-oxopentanoate = 5-aminolevulinate. It functions in the pathway porphyrin-containing compound metabolism; protoporphyrin-IX biosynthesis; 5-aminolevulinate from L-glutamyl-tRNA(Glu): step 2/2. This is Glutamate-1-semialdehyde 2,1-aminomutase from Salmonella choleraesuis (strain SC-B67).